The sequence spans 225 residues: Endonuclease V (225 aa).

Positions 43 and 110 each coordinate Mg(2+).

The protein belongs to the endonuclease V family. It depends on Mg(2+) as a cofactor.

The protein resides in the cytoplasm. The catalysed reaction is Endonucleolytic cleavage at apurinic or apyrimidinic sites to products with a 5'-phosphate.. In terms of biological role, DNA repair enzyme involved in the repair of deaminated bases. Selectively cleaves double-stranded DNA at the second phosphodiester bond 3' to a deoxyinosine leaving behind the intact lesion on the nicked DNA. The sequence is that of Endonuclease V from Thermotoga petrophila (strain ATCC BAA-488 / DSM 13995 / JCM 10881 / RKU-1).